A 2170-amino-acid polypeptide reads, in one-letter code: Brefeldin A-inhibited guanine nucleotide-exchange protein 3 (2170 aa).

Ser471 is subject to Phosphoserine. Disordered regions lie at residues 489 to 547 and 613 to 634; these read EHTP…MGKV and AAEKDSGRSDVSDIGSDNCSLA. Residues 503–524 show a composition bias toward polar residues; the sequence is ISISVTTDTGQTTLEGELGQTT. The 214-residue stretch at 579-792 folds into the SEC7 domain; the sequence is RTRSYGSRYS…EELYHQVLDR (214 aa). A compositionally biased stretch (basic and acidic residues) spans 614 to 623; the sequence is AEKDSGRSDV. Phosphoserine occurs at positions 628, 632, and 1045. Residues 1488–1508 form a helical membrane-spanning segment; it reads PGFGIYAVVHLLLPVMSLWLL. The interval 1843-1872 is disordered; the sequence is SSDSSQQCSSEDEDIFEETAQVSPPRGKEK. Phosphoserine is present on Ser1881. Residues 1938 to 1955 show a composition bias toward polar residues; it reads FQSESSTPSTGGFSGKNT. Disordered regions lie at residues 1938-1997 and 2024-2058; these read FQSE…RKKE and KRRQPHNLPPFPKEVKVDKKGEPLGPRGPDSPLLQ. A compositionally biased stretch (basic and acidic residues) spans 1956–1966; it reads PSEDDRREHLS. Residues Ser1975 and Ser1984 each carry the phosphoserine modification. 2 stretches are compositionally biased toward basic and acidic residues: residues 1986-1997 and 2036-2045; these read KTEKKDPGRKKE and KEVKVDKKGE. A phosphoserine mark is found at Ser2072, Ser2074, Ser2088, Ser2094, and Ser2096. Residues 2078-2097 form a disordered region; it reads ELLRQEKRPRSGSTGSSLSV. Residues 2088 to 2097 are compositionally biased toward low complexity; sequence SGSTGSSLSV.

In terms of assembly, interacts with PHB2. Expressed in pancreatic islet (insulin granules of islet alpha and beta cells) and brain (at protein level).

The protein localises to the cytoplasmic vesicle. It localises to the secretory vesicle. Its subcellular location is the secretory vesicle membrane. Participates in the regulation of systemic glucose homeostasis, where it negatively regulates insulin granule biogenesis in pancreatic islet beta cells. Also regulates glucagon granule production in pancreatic alpha cells. Inhibits nuclear translocation of the transcriptional coregulator PHB2 and may enhance estrogen receptor alpha (ESR1) transcriptional activity in breast cancer cells. This is Brefeldin A-inhibited guanine nucleotide-exchange protein 3 from Mus musculus (Mouse).